A 514-amino-acid chain; its full sequence is UDP-N-acetylmuramyl-tripeptide synthetase (514 aa).

Residues Leu44 and Ser46 each contribute to the UDP-N-acetyl-alpha-D-muramoyl-L-alanyl-D-glutamate site. Residue 129–135 (GTNGKTS) coordinates ATP. UDP-N-acetyl-alpha-D-muramoyl-L-alanyl-D-glutamate is bound by residues 171–172 (TT), Ser198, and Arg206. An N6-carboxylysine modification is found at Lys238.

It belongs to the MurCDEF family. MurE subfamily. In terms of processing, carboxylation is probably crucial for Mg(2+) binding and, consequently, for the gamma-phosphate positioning of ATP.

The protein resides in the cytoplasm. It participates in cell wall biogenesis; peptidoglycan biosynthesis. Its function is as follows. Catalyzes the addition of an amino acid to the nucleotide precursor UDP-N-acetylmuramoyl-L-alanyl-D-glutamate (UMAG) in the biosynthesis of bacterial cell-wall peptidoglycan. The sequence is that of UDP-N-acetylmuramyl-tripeptide synthetase from Leifsonia xyli subsp. xyli (strain CTCB07).